Here is a 134-residue protein sequence, read N- to C-terminus: Large ribosomal subunit protein bL12 (134 aa).

It belongs to the bacterial ribosomal protein bL12 family. In terms of assembly, homodimer. Part of the ribosomal stalk of the 50S ribosomal subunit. Forms a multimeric L10(L12)X complex, where L10 forms an elongated spine to which 2 to 4 L12 dimers bind in a sequential fashion. Binds GTP-bound translation factors.

Forms part of the ribosomal stalk which helps the ribosome interact with GTP-bound translation factors. Is thus essential for accurate translation. The chain is Large ribosomal subunit protein bL12 from Anaplasma phagocytophilum (strain HZ).